A 684-amino-acid chain; its full sequence is Cleavage and polyadenylation specificity factor 73 (684 aa).

6 residues coordinate Zn(2+): His77, His79, Asp81, His82, His164, and Asp185. Catalysis depends on His402, which acts as the Proton donor. His424 contributes to the Zn(2+) binding site.

The protein belongs to the metallo-beta-lactamase superfamily. RNA-metabolizing metallo-beta-lactamase-like family. CPSF3 subfamily. Component of the cleavage and polyadenylation specificity factor (CPSF) complex, composed of at least Clp, Cpsf73, Cpsf100 and Cpsf160. Interacts with Sym and Cpsf100 forming a core cleavage factor required for both polyadenylated and histone mRNA processing. Interacts with Slbp and Lsm11. It depends on Zn(2+) as a cofactor.

It is found in the nucleus. In terms of biological role, component of the cleavage and polyadenylation specificity factor (CPSF) complex that plays a key role in pre-mRNA 3'-end formation, recognizing the AAUAAA signal sequence and interacting with poly(A) polymerase and other factors to bring about cleavage and poly(A) addition. Has endonuclease activity and functions as an mRNA 3'-end-processing endonuclease. Required for the cotranscriptional processing of 3'-ends of polyadenylated and histone pre-mRNA. The chain is Cleavage and polyadenylation specificity factor 73 (Cpsf73) from Drosophila melanogaster (Fruit fly).